A 293-amino-acid polypeptide reads, in one-letter code: Protein boule-like (293 aa).

The segment covering 1–16 (METESRAQSTNQTQTD) has biased composition (polar residues). The segment at 1–39 (METESRAQSTNQTQTDSLSPSPNPVSPVPLNNPTSGPRY) is disordered. A phosphoserine mark is found at Ser19, Ser21, and Ser26. The 78-residue stretch at 45–122 (NRIFVGGIDF…KKLNIGPAIR (78 aa)) folds into the RRM domain. Residues 172-196 (PSRSISSSPVMVAQPVYQQPAYHYQ) enclose the DAZ domain.

Belongs to the RRM DAZ family. In terms of assembly, interacts with DAZ1 and DAZL. In terms of tissue distribution, testis specific. Not expressed in early embryos, primoridal germ cells and spermatogonial cells. First expressed in the cytoplasm of spermatocytes and then persists through meiosis.

It is found in the cytoplasm. Functionally, probable RNA-binding protein, which may be required during spermatogenesis. May act by binding to the 3'-UTR of mRNAs and regulating their translation. The chain is Protein boule-like from Mus musculus (Mouse).